Reading from the N-terminus, the 243-residue chain is Mitochondrial import inner membrane translocase subunit TIM17-2 (243 aa).

4 helical membrane-spanning segments follow: residues 19-36 (IGGA…FHFI), 66-83 (FAVW…MVYL), 90-109 (WNSI…RQGA), and 115-137 (SAIF…NKVL). Tandem repeats lie at residues 149 to 151 (GMQ), 152 to 154 (GMP), 155 to 157 (GMQ), 158 to 160 (GMQ), 161 to 163 (GMP), 164 to 166 (GMP), 167 to 169 (GMQ), 170 to 172 (GMP), 173 to 175 (GMQ), and 176 to 178 (GMQ). The segment at 149–178 (GMQGMPGMQGMQGMPGMPGMQGMPGMQGMQ) is 10 X approximate repeats GMQ/P. Residues 166–183 (PGMQGMPGMQGMQMGQMQ) show a composition bias toward low complexity. A disordered region spans residues 166 to 243 (PGMQGMPGMQ…APPVPSFEFK (78 aa)). The span at 184–198 (SQAQIRSESQNQNTA) shows a compositional bias: polar residues. Residues 211–228 (FDKKKEEVQPGSESKTEV) are compositionally biased toward basic and acidic residues.

The protein belongs to the Tim17/Tim22/Tim23 family. In terms of assembly, component of the TIM17:23 complex at least composed of TIM23, TIM17 and TIM50. The complex interacts with the TIM44 component of the PAM complex. Interacts with TIM23-2. In terms of tissue distribution, expressed in roots, flowers, leaves and young cotyledons.

The protein resides in the mitochondrion inner membrane. It localises to the mitochondrion outer membrane. In terms of biological role, essential component of the TIM17:23 complex, a complex that mediates the translocation of transit peptide-containing proteins across the mitochondrial inner membrane. Links the inner and outer membranes. This is Mitochondrial import inner membrane translocase subunit TIM17-2 (TIM17-2) from Arabidopsis thaliana (Mouse-ear cress).